The following is a 362-amino-acid chain: ATPase ARSA2 (362 aa).

Position 27–34 (lysine 27–threonine 34) interacts with ATP. Aspartate 58 is a catalytic residue. Glutamate 235 and asparagine 262 together coordinate ATP.

This sequence belongs to the arsA ATPase family. In terms of assembly, homodimer. Interacts with SEC61B.

The protein localises to the cytoplasm. It localises to the cytosol. Its subcellular location is the endoplasmic reticulum. In terms of biological role, ATPase required for the post-translational delivery of tail-anchored (TA) proteins to the endoplasmic reticulum. Recognizes and selectively binds the transmembrane domain of TA proteins in the cytosol. This complex then targets to the endoplasmic reticulum by membrane-bound receptors, where the tail-anchored protein is released for insertion. This process is regulated by ATP binding and hydrolysis. ATP binding drives the homodimer towards the closed dimer state, facilitating recognition of newly synthesized TA membrane proteins. ATP hydrolysis is required for insertion. Subsequently, the homodimer reverts towards the open dimer state, lowering its affinity for the membrane-bound receptor, and returning it to the cytosol to initiate a new round of targeting. This is ATPase ARSA2 from Chlamydomonas reinhardtii (Chlamydomonas smithii).